The chain runs to 116 residues: NADH-ubiquinone oxidoreductase chain 3 (116 aa).

3 helical membrane-spanning segments follow: residues 3 to 23 (LITT…TISF), 56 to 76 (FFLI…LLPL), and 87 to 107 (LTLI…IYEW).

This sequence belongs to the complex I subunit 3 family.

It localises to the mitochondrion membrane. The enzyme catalyses a ubiquinone + NADH + 5 H(+)(in) = a ubiquinol + NAD(+) + 4 H(+)(out). Core subunit of the mitochondrial membrane respiratory chain NADH dehydrogenase (Complex I) that is believed to belong to the minimal assembly required for catalysis. Complex I functions in the transfer of electrons from NADH to the respiratory chain. The immediate electron acceptor for the enzyme is believed to be ubiquinone. This is NADH-ubiquinone oxidoreductase chain 3 (MT-ND3) from Oncorhynchus keta (Chum salmon).